The primary structure comprises 500 residues: Lycopene beta cyclase, chloroplastic (500 aa).

The transit peptide at 1–81 directs the protein to the chloroplast; sequence MDTLLKTPNK…ELPMYDPSKG (81 aa). Position 86–114 (86–114) interacts with NAD(+); sequence LAVVGGGPAGLAVAQQVSEAGLSVVSIDP.

This sequence belongs to the lycopene cyclase family.

It is found in the plastid. The protein localises to the chloroplast. It catalyses the reaction a carotenoid psi-end group = a carotenoid beta-end derivative. The protein operates within carotenoid biosynthesis; beta-carotene biosynthesis. Its pathway is carotenoid biosynthesis; beta-zeacarotene biosynthesis. Functionally, catalyzes the double cyclization reaction which converts lycopene to beta-carotene and neurosporene to beta-zeacarotene. This chain is Lycopene beta cyclase, chloroplastic (LCY1), found in Nicotiana tabacum (Common tobacco).